The following is a 319-amino-acid chain: Acetyl-coenzyme A carboxylase carboxyl transferase subunit alpha (319 aa).

Residues Asn35–Asp296 enclose the CoA carboxyltransferase C-terminal domain.

This sequence belongs to the AccA family. As to quaternary structure, acetyl-CoA carboxylase is a heterohexamer composed of biotin carboxyl carrier protein (AccB), biotin carboxylase (AccC) and two subunits each of ACCase subunit alpha (AccA) and ACCase subunit beta (AccD).

The protein resides in the cytoplasm. It carries out the reaction N(6)-carboxybiotinyl-L-lysyl-[protein] + acetyl-CoA = N(6)-biotinyl-L-lysyl-[protein] + malonyl-CoA. It participates in lipid metabolism; malonyl-CoA biosynthesis; malonyl-CoA from acetyl-CoA: step 1/1. In terms of biological role, component of the acetyl coenzyme A carboxylase (ACC) complex. First, biotin carboxylase catalyzes the carboxylation of biotin on its carrier protein (BCCP) and then the CO(2) group is transferred by the carboxyltransferase to acetyl-CoA to form malonyl-CoA. The protein is Acetyl-coenzyme A carboxylase carboxyl transferase subunit alpha of Edwardsiella ictaluri (strain 93-146).